A 94-amino-acid chain; its full sequence is Gibberellin-regulated protein 11 (94 aa).

The N-terminal stretch at 1 to 23 (MAVFRVLLASLLISLLVLDFVHA) is a signal peptide.

It belongs to the GASA family. In terms of processing, six disulfide bonds may be present.

The protein resides in the secreted. Gibberellin-regulated protein that may function in hormonal controlled steps of development such as seed germination, flowering and seed maturation. In Arabidopsis thaliana (Mouse-ear cress), this protein is Gibberellin-regulated protein 11 (GASA11).